Consider the following 453-residue polypeptide: SH2 domain-containing protein 4A (453 aa).

A coiled-coil region spans residues 96 to 127 (EIIAEQARREAEKEAEQLRKKQEVELSQLSTL). A disordered region spans residues 280-301 (AVKRPPIPPKPKLPPSANNSSI). Residues 284–293 (PPIPPKPKLP) show a composition bias toward pro residues. The SH2 domain occupies 347-439 (WFHGIISRQE…LGRELLRFPC (93 aa)).

The protein localises to the cytoplasm. Its function is as follows. Inhibits estrogen-induced cell proliferation. This chain is SH2 domain-containing protein 4A (sh2d4a), found in Xenopus tropicalis (Western clawed frog).